A 598-amino-acid polypeptide reads, in one-letter code: Elongation factor 4 (598 aa).

The region spanning 2-184 (NNIRNFAIIA…AIVAKLPAPQ (183 aa)) is the tr-type G domain. GTP is bound by residues 14–19 (DHGKST) and 131–134 (NKVD).

It belongs to the TRAFAC class translation factor GTPase superfamily. Classic translation factor GTPase family. LepA subfamily.

It localises to the cell membrane. It carries out the reaction GTP + H2O = GDP + phosphate + H(+). Functionally, required for accurate and efficient protein synthesis under certain stress conditions. May act as a fidelity factor of the translation reaction, by catalyzing a one-codon backward translocation of tRNAs on improperly translocated ribosomes. Back-translocation proceeds from a post-translocation (POST) complex to a pre-translocation (PRE) complex, thus giving elongation factor G a second chance to translocate the tRNAs correctly. Binds to ribosomes in a GTP-dependent manner. The protein is Elongation factor 4 of Wolbachia sp. subsp. Drosophila simulans (strain wRi).